The chain runs to 144 residues: Mercuric transport protein MerC (144 aa).

The Cytoplasmic segment spans residues methionine 1–phenylalanine 21. Residues serine 22 to leucine 42 form a helical membrane-spanning segment. Hg(2+) contacts are provided by cysteine 23 and cysteine 26. Topologically, residues serine 43–glutamate 46 are periplasmic. The helical transmembrane segment at glycine 47–alanine 67 threads the bilayer. Over glycine 68 to threonine 78 the chain is Cytoplasmic. Residues leucine 79–phenylalanine 99 traverse the membrane as a helical segment. Over leucine 100 to aspartate 103 the chain is Periplasmic. Residues leucine 104–methionine 124 form a helical membrane-spanning segment. Residues valine 125–serine 144 are Cytoplasmic-facing.

Monomer.

It localises to the cell inner membrane. Its activity is regulated as follows. Inhibited by the thiol-modifying reagent N-ethylmaleimide (NEM). Functionally, involved in mercuric ion uptake. In Acidithiobacillus ferrooxidans (Thiobacillus ferrooxidans), this protein is Mercuric transport protein MerC.